Here is a 284-residue protein sequence, read N- to C-terminus: RNase adapter protein RapZ (284 aa).

8-15 is a binding site for ATP; that stretch reads GRSGSGKS. 56–59 contributes to the GTP binding site; the sequence is DVRN. The segment at 266–284 is RNA-binding; sequence RSRGKNAQSRHRTLEKSKS.

Belongs to the RapZ-like family. RapZ subfamily. In terms of assembly, homotrimer.

In terms of biological role, modulates the synthesis of GlmS, by affecting the processing and stability of the regulatory small RNA GlmZ. When glucosamine-6-phosphate (GlcN6P) concentrations are high in the cell, RapZ binds GlmZ and targets it to cleavage by RNase E. Consequently, GlmZ is inactivated and unable to activate GlmS synthesis. Under low GlcN6P concentrations, RapZ is sequestered and inactivated by an other regulatory small RNA, GlmY, preventing GlmZ degradation and leading to synthesis of GlmS. The protein is RNase adapter protein RapZ of Sodalis glossinidius (strain morsitans).